Here is a 266-residue protein sequence, read N- to C-terminus: Signal peptidase I (266 aa).

Over 1 to 20 (MQTDNTKSNTNKTAKQEWGS) the chain is Cytoplasmic. A helical membrane pass occupies residues 21–41 (FAFVICIALLIRILIMEPFTV). At 42–266 (PTGSMKATIL…IFRNLYNTDA (225 aa)) the chain is on the periplasmic side. Catalysis depends on residues Ser45 and Lys108.

Belongs to the peptidase S26 family.

It localises to the cell inner membrane. The catalysed reaction is Cleavage of hydrophobic, N-terminal signal or leader sequences from secreted and periplasmic proteins.. Functionally, complements E.coli mutants temperature-sensitive for LepB function. This chain is Signal peptidase I (lepB), found in Rickettsia rickettsii (strain Sheila Smith).